The following is a 194-amino-acid chain: Fatty acid metabolism regulator protein (194 aa).

Residues 5 to 65 (RPKYMQIIDA…SLFKEKMGQF (61 aa)) form the HTH tetR-type domain. The segment at residues 28-47 (QVSKIAKQAGVADGTIYLYF) is a DNA-binding region (H-T-H motif).

Homodimer. Binds to DNA.

Its subcellular location is the cytoplasm. Transcriptional regulator in fatty acid degradation. Represses transcription of genes required for fatty acid transport and beta-oxidation, including acdA, fadA, fadB, fadE, fadF, fadG, fadH, fadM, fadN, lcfA and lcfB. Binding of FadR to DNA is specifically inhibited by long chain fatty acyl-CoA compounds of 14-20 carbon atoms in length. The polypeptide is Fatty acid metabolism regulator protein (fadR) (Bacillus subtilis (strain 168)).